A 212-amino-acid polypeptide reads, in one-letter code: Ribosome biogenesis protein RLP7 (212 aa).

Belongs to the universal ribosomal protein uL30 family.

The protein resides in the nucleus. The protein localises to the nucleolus. Functionally, involved in the biogenesis of the 60S ribosomal subunit. May act as a specificity factor that binds precursor rRNAs and tethers the enzymes that carry out the early 5' to 3' exonucleolytic reactions that generate the mature rRNAs. The polypeptide is Ribosome biogenesis protein RLP7 (RLP7) (Cyberlindnera jadinii (Torula yeast)).